A 250-amino-acid polypeptide reads, in one-letter code: Leucyl/phenylalanyl-tRNA--protein transferase (250 aa).

The protein belongs to the L/F-transferase family.

The protein localises to the cytoplasm. The catalysed reaction is N-terminal L-lysyl-[protein] + L-leucyl-tRNA(Leu) = N-terminal L-leucyl-L-lysyl-[protein] + tRNA(Leu) + H(+). The enzyme catalyses N-terminal L-arginyl-[protein] + L-leucyl-tRNA(Leu) = N-terminal L-leucyl-L-arginyl-[protein] + tRNA(Leu) + H(+). It carries out the reaction L-phenylalanyl-tRNA(Phe) + an N-terminal L-alpha-aminoacyl-[protein] = an N-terminal L-phenylalanyl-L-alpha-aminoacyl-[protein] + tRNA(Phe). Functions in the N-end rule pathway of protein degradation where it conjugates Leu, Phe and, less efficiently, Met from aminoacyl-tRNAs to the N-termini of proteins containing an N-terminal arginine or lysine. In Xanthomonas oryzae pv. oryzae (strain MAFF 311018), this protein is Leucyl/phenylalanyl-tRNA--protein transferase.